Reading from the N-terminus, the 147-residue chain is Small ribosomal subunit protein uS12 (147 aa).

Positions Met-1–Pro-22 are disordered. Asp-102 is subject to 3-methylthioaspartic acid.

It belongs to the universal ribosomal protein uS12 family. Part of the 30S ribosomal subunit. Contacts proteins S8 and S17. May interact with IF1 in the 30S initiation complex.

In terms of biological role, with S4 and S5 plays an important role in translational accuracy. Its function is as follows. Interacts with and stabilizes bases of the 16S rRNA that are involved in tRNA selection in the A site and with the mRNA backbone. Located at the interface of the 30S and 50S subunits, it traverses the body of the 30S subunit contacting proteins on the other side and probably holding the rRNA structure together. The combined cluster of proteins S8, S12 and S17 appears to hold together the shoulder and platform of the 30S subunit. The polypeptide is Small ribosomal subunit protein uS12 (Streptococcus pyogenes serotype M12 (strain MGAS2096)).